We begin with the raw amino-acid sequence, 303 residues long: Acetaldehyde dehydrogenase (303 aa).

Cys-131 (acyl-thioester intermediate) is an active-site residue. NAD(+)-binding positions include 162 to 170 (SVGPGTRAN) and Asn-273.

Belongs to the acetaldehyde dehydrogenase family.

It carries out the reaction acetaldehyde + NAD(+) + CoA = acetyl-CoA + NADH + H(+). The protein is Acetaldehyde dehydrogenase of Marinomonas sp. (strain MWYL1).